The sequence spans 351 residues: Probable galacturonosyltransferase-like 4 (351 aa).

The Cytoplasmic portion of the chain corresponds to 1–8 (MASRSLSY). A helical; Signal-anchor for type II membrane protein transmembrane segment spans residues 9-29 (TQLLGLLSFILLLVTTTTMAV). The Lumenal segment spans residues 30–351 (RVGVILHKPS…YRSSRHSLEE (322 aa)). N-linked (GlcNAc...) asparagine glycosylation is found at Asn96 and Asn203.

Belongs to the glycosyltransferase 8 family.

The protein localises to the golgi apparatus membrane. It participates in glycan metabolism; pectin biosynthesis. Its function is as follows. May be involved in pectin and/or xylans biosynthesis in cell walls. The chain is Probable galacturonosyltransferase-like 4 (GATL4) from Arabidopsis thaliana (Mouse-ear cress).